The primary structure comprises 325 residues: Formimidoylglutamase (325 aa).

Mn(2+) is bound by residues His-125, Asp-155, His-157, Asp-159, Cys-246, and Asp-248.

This sequence belongs to the arginase family. The cofactor is Mn(2+).

It carries out the reaction N-formimidoyl-L-glutamate + H2O = formamide + L-glutamate. The protein operates within amino-acid degradation; L-histidine degradation into L-glutamate; L-glutamate from N-formimidoyl-L-glutamate (hydrolase route): step 1/1. Functionally, catalyzes the conversion of N-formimidoyl-L-glutamate to L-glutamate and formamide. This Ralstonia nicotianae (strain ATCC BAA-1114 / GMI1000) (Ralstonia solanacearum) protein is Formimidoylglutamase.